The following is a 203-amino-acid chain: Protein shisa-like-1a (203 aa).

Residues 1-25 form the signal peptide; it reads MIMNGRWSFNTLAIIFILLSTAALS. The Extracellular portion of the chain corresponds to 26 to 97; sequence AHFRVCEPYS…SDSFAHNNYT (72 aa). 5 N-linked (GlcNAc...) asparagine glycosylation sites follow: asparagine 53, asparagine 63, asparagine 72, asparagine 83, and asparagine 95. The helical transmembrane segment at 98-118 threads the bilayer; it reads ALIGVWIYGFFVMVLLALDFL. Residues 119 to 203 lie on the Cytoplasmic side of the membrane; that stretch reads YYSAMNYELC…LLSFQTSTAW (85 aa). The interval 157–191 is disordered; that stretch reads ELNTGPGLSQQQQLHLHHHHHHHHPRHSLRGDTQS. A compositionally biased stretch (low complexity) spans 161 to 170; that stretch reads GPGLSQQQQL. A compositionally biased stretch (basic residues) spans 171–184; the sequence is HLHHHHHHHHPRHS.

It belongs to the shisa family.

It is found in the membrane. The chain is Protein shisa-like-1a (shisal1a) from Danio rerio (Zebrafish).